A 386-amino-acid chain; its full sequence is Chaperone protein DnaJ (386 aa).

The J domain occupies 4–68; that stretch reads NFYDVLGVSR…QKRQQYDQLG (65 aa). Basic and acidic residues-rich tracts occupy residues 22–35 and 43–79; these read KAYR…HPDV and ERFK…DKRG. A disordered region spans residues 22 to 132; the sequence is KAYRKQAAEH…GGNRPRQGQD (111 aa). Gly residues-rich tracts occupy residues 80 to 104 and 113 to 125; these read ATGG…GAGG and FGGG…GGGN. The CR-type zinc-finger motif lies at 147-229; it reads GATKEVTLTR…CGGDGVVREE (83 aa). Zn(2+) is bound by residues Cys-160, Cys-163, Cys-177, Cys-180, Cys-203, Cys-206, Cys-217, and Cys-220. CXXCXGXG motif repeat units follow at residues 160 to 167, 177 to 184, 203 to 210, and 217 to 224; these read CDTCDGAG, CSQCNGRG, CPRCEGSG, and CADCGGDG.

The protein belongs to the DnaJ family. In terms of assembly, homodimer. It depends on Zn(2+) as a cofactor.

The protein localises to the cytoplasm. In terms of biological role, participates actively in the response to hyperosmotic and heat shock by preventing the aggregation of stress-denatured proteins and by disaggregating proteins, also in an autonomous, DnaK-independent fashion. Unfolded proteins bind initially to DnaJ; upon interaction with the DnaJ-bound protein, DnaK hydrolyzes its bound ATP, resulting in the formation of a stable complex. GrpE releases ADP from DnaK; ATP binding to DnaK triggers the release of the substrate protein, thus completing the reaction cycle. Several rounds of ATP-dependent interactions between DnaJ, DnaK and GrpE are required for fully efficient folding. Also involved, together with DnaK and GrpE, in the DNA replication of plasmids through activation of initiation proteins. The protein is Chaperone protein DnaJ of Halorubrum lacusprofundi (strain ATCC 49239 / DSM 5036 / JCM 8891 / ACAM 34).